The chain runs to 498 residues: MVGRLKESPSQEMIDLLFKPSIRSDLKHHYSYLLKINSVHLFMLKSEGIISDEAASKIHSVLTHLQVTGKEALSINPALEDLYFNVEAYIIEQTGPEIGGQMHTGRSRNDILATVTRMRIREEMLEIYELVCTLRRTLIDLATEHTSTLMTGYTHLQPAEPITFAHYLSALLHGFERDFTRLYNCYAHINKSPLGSCALASTTFSINRKFTMELLGFADLLENSLDGIASRDYALEALSALSIFSNSLSRFAQDLYTWCSYEFGYLEVGHSVAVISSIMPQKKNPVTLEHIKAKAGHIQGALVSSLSVLKNTLYSHSRDTSMESMKYTWEAINETKAAIRLMIKTLQTLTVHKDNMAATTRQNFSTVTELANALVRHYHFSFRTAHHIVAEIVNETLNQGLGSDKIEASTVERAIKQVTAKTVSVTKEFVEQALDPERNISLRTVRGGSAPVEVARQLQQLEQTLASDHQKISDLKQALQSADQLYKHYAAELERGAQ.

It belongs to the lyase 1 family. Argininosuccinate lyase subfamily.

The protein resides in the cytoplasm. The enzyme catalyses 2-(N(omega)-L-arginino)succinate = fumarate + L-arginine. It participates in amino-acid biosynthesis; L-arginine biosynthesis; L-arginine from L-ornithine and carbamoyl phosphate: step 3/3. This is Argininosuccinate lyase 1 from Shouchella clausii (strain KSM-K16) (Alkalihalobacillus clausii).